The primary structure comprises 54 residues: UPF0391 membrane protein Mpe_A2904 (54 aa).

A run of 2 helical transmembrane segments spans residues alanine 5–alanine 25 and isoleucine 30–leucine 50.

This sequence belongs to the UPF0391 family.

It is found in the cell membrane. The chain is UPF0391 membrane protein Mpe_A2904 from Methylibium petroleiphilum (strain ATCC BAA-1232 / LMG 22953 / PM1).